Consider the following 98-residue polypeptide: NADH-ubiquinone oxidoreductase chain 4L (98 aa).

The next 3 membrane-spanning stretches (helical) occupy residues 1–21 (MSMV…GLLI), 29–49 (SLLC…VTIL), and 61–81 (IILL…LVMV).

It belongs to the complex I subunit 4L family. Core subunit of respiratory chain NADH dehydrogenase (Complex I) which is composed of 45 different subunits.

Its subcellular location is the mitochondrion inner membrane. It catalyses the reaction a ubiquinone + NADH + 5 H(+)(in) = a ubiquinol + NAD(+) + 4 H(+)(out). Core subunit of the mitochondrial membrane respiratory chain NADH dehydrogenase (Complex I) which catalyzes electron transfer from NADH through the respiratory chain, using ubiquinone as an electron acceptor. Part of the enzyme membrane arm which is embedded in the lipid bilayer and involved in proton translocation. The protein is NADH-ubiquinone oxidoreductase chain 4L (MT-ND4L) of Taxidea taxus (American badger).